A 158-amino-acid chain; its full sequence is SsrA-binding protein (158 aa).

Belongs to the SmpB family.

The protein localises to the cytoplasm. Its function is as follows. Required for rescue of stalled ribosomes mediated by trans-translation. Binds to transfer-messenger RNA (tmRNA), required for stable association of tmRNA with ribosomes. tmRNA and SmpB together mimic tRNA shape, replacing the anticodon stem-loop with SmpB. tmRNA is encoded by the ssrA gene; the 2 termini fold to resemble tRNA(Ala) and it encodes a 'tag peptide', a short internal open reading frame. During trans-translation Ala-aminoacylated tmRNA acts like a tRNA, entering the A-site of stalled ribosomes, displacing the stalled mRNA. The ribosome then switches to translate the ORF on the tmRNA; the nascent peptide is terminated with the 'tag peptide' encoded by the tmRNA and targeted for degradation. The ribosome is freed to recommence translation, which seems to be the essential function of trans-translation. This is SsrA-binding protein from Symbiobacterium thermophilum (strain DSM 24528 / JCM 14929 / IAM 14863 / T).